The primary structure comprises 383 residues: Queuine tRNA-ribosyltransferase (383 aa).

Catalysis depends on aspartate 90, which acts as the Proton acceptor. Substrate is bound by residues 90–94, aspartate 144, glutamine 193, and glycine 227; that span reads DSGGF. The segment at 258-264 is RNA binding; sequence GVGTPED. Residue aspartate 277 is the Nucleophile of the active site. The RNA binding; important for wobble base 34 recognition stretch occupies residues 282–286; it reads TRNAR. 4 residues coordinate Zn(2+): cysteine 315, cysteine 317, cysteine 320, and histidine 346.

Belongs to the queuine tRNA-ribosyltransferase family. In terms of assembly, homodimer. Within each dimer, one monomer is responsible for RNA recognition and catalysis, while the other monomer binds to the replacement base PreQ1. Zn(2+) serves as cofactor.

It catalyses the reaction 7-aminomethyl-7-carbaguanine + guanosine(34) in tRNA = 7-aminomethyl-7-carbaguanosine(34) in tRNA + guanine. The protein operates within tRNA modification; tRNA-queuosine biosynthesis. In terms of biological role, catalyzes the base-exchange of a guanine (G) residue with the queuine precursor 7-aminomethyl-7-deazaguanine (PreQ1) at position 34 (anticodon wobble position) in tRNAs with GU(N) anticodons (tRNA-Asp, -Asn, -His and -Tyr). Catalysis occurs through a double-displacement mechanism. The nucleophile active site attacks the C1' of nucleotide 34 to detach the guanine base from the RNA, forming a covalent enzyme-RNA intermediate. The proton acceptor active site deprotonates the incoming PreQ1, allowing a nucleophilic attack on the C1' of the ribose to form the product. After dissociation, two additional enzymatic reactions on the tRNA convert PreQ1 to queuine (Q), resulting in the hypermodified nucleoside queuosine (7-(((4,5-cis-dihydroxy-2-cyclopenten-1-yl)amino)methyl)-7-deazaguanosine). The sequence is that of Queuine tRNA-ribosyltransferase from Ralstonia pickettii (strain 12J).